The following is a 109-amino-acid chain: Nucleoid-associated protein Ping_2276 (109 aa).

Belongs to the YbaB/EbfC family. As to quaternary structure, homodimer.

The protein localises to the cytoplasm. It localises to the nucleoid. Functionally, binds to DNA and alters its conformation. May be involved in regulation of gene expression, nucleoid organization and DNA protection. In Psychromonas ingrahamii (strain DSM 17664 / CCUG 51855 / 37), this protein is Nucleoid-associated protein Ping_2276.